The primary structure comprises 411 residues: Peptidase T (411 aa).

Histidine 78 is a Zn(2+) binding site. Residue aspartate 80 is part of the active site. Position 140 (aspartate 140) interacts with Zn(2+). Glutamate 173 acts as the Proton acceptor in catalysis. The Zn(2+) site is built by glutamate 174, aspartate 196, and histidine 379.

Belongs to the peptidase M20B family. Zn(2+) serves as cofactor.

The protein localises to the cytoplasm. It catalyses the reaction Release of the N-terminal residue from a tripeptide.. In terms of biological role, cleaves the N-terminal amino acid of tripeptides. This Yersinia pseudotuberculosis serotype O:1b (strain IP 31758) protein is Peptidase T.